A 206-amino-acid polypeptide reads, in one-letter code: Small ribosomal subunit protein uS4 (206 aa).

One can recognise an S4 RNA-binding domain in the interval 96 to 157 (SRLDNVVYRM…KAQKQLRVQA (62 aa)).

Belongs to the universal ribosomal protein uS4 family. In terms of assembly, part of the 30S ribosomal subunit. Contacts protein S5. The interaction surface between S4 and S5 is involved in control of translational fidelity.

Functionally, one of the primary rRNA binding proteins, it binds directly to 16S rRNA where it nucleates assembly of the body of the 30S subunit. With S5 and S12 plays an important role in translational accuracy. The protein is Small ribosomal subunit protein uS4 of Alkalilimnicola ehrlichii (strain ATCC BAA-1101 / DSM 17681 / MLHE-1).